Reading from the N-terminus, the 108-residue chain is Succinate dehydrogenase assembly factor 4, mitochondrial (108 aa).

The segment covering 33-46 (NNNNNNNNNNNNNN) has biased composition (low complexity). Disordered regions lie at residues 33 to 59 (NNNN…KENQ) and 79 to 108 (NPIT…VSDF). The segment covering 95-108 (RYNDWERNGRVSDF) has biased composition (basic and acidic residues).

It belongs to the SDHAF4 family. Interacts with SdhA in its FAD-bound form.

Its subcellular location is the mitochondrion matrix. Its function is as follows. Plays an essential role in the assembly of succinate dehydrogenase (SDH), an enzyme complex (also referred to as respiratory complex II) that is a component of both the tricarboxylic acid (TCA) cycle and the mitochondrial electron transport chain, and which couples the oxidation of succinate to fumarate with the reduction of ubiquinone (coenzyme Q) to ubiquinol. Binds to the flavoprotein subunit SdhA in its FAD-bound form, blocking the generation of excess reactive oxygen species (ROS) and facilitating its assembly with the iron-sulfur protein subunit SdhB into the SDH catalytic dimer. In Dictyostelium discoideum (Social amoeba), this protein is Succinate dehydrogenase assembly factor 4, mitochondrial.